Here is an 844-residue protein sequence, read N- to C-terminus: MRIMIKGGVWKNTEDEILKAAVMKYGKNQWARISSLLVRKSAKQCKARWYEWLDPSIKKTEWTREEDEKLLHLAKLLPTQWRTIAPIVGRTPSQCLERYEKLLDAACTKDENYDAADDPRKLRPGEIDPNPEAKPARPDPVDMDEDEKEMLSEARARLANTRGKKAKRKAREKQLEEARRLASLQKRRELKAAGIDGRHRKRKRKGIDYNAEIPFEKRAPAGFYDTADEDRPADQVKFPTTIEELEGKRRADVEAHLRKQDVARNKIAQRQDAPAAILQANKLNDPEVVRKRSKLMLPPPQISDHELEEIAKMGYASDLLAENEELTEGSAATRALLANYSQTPRQGMTPMRTPQRTPAGKGDAIMMEAENLARLRDSQTPLLGGENPELHPSDFTGVTPRKKEIQTPNPMLTPSMTPGGAGLTPRIGLTPSRDGSSFSMTPKGTPFRDELHINEDMDMHESAKLERQRREEARRSLRSGLTGLPQPKNEYQIVAQPPPEESEEPEEKIEEDMSDRIAREKAEEEARQQALLKKRSKVLQRDLPRPPAASLAVIRNSLLSADGDKSSVVPPTPIEVADKMVREELLQLLEHDNAKYPLDDKAEKKKGAKNRTNRSASQVLAIDDFDENELQEADKMIKEEGKFLCVSMGHENKTLDDFVEAHNTCVNDLMYFPTRSAYELSSVAGNADKVAAFQEEMENVRKKMEEDEKKAEHMKAKYKTYTKGHERRAETVWTQIEATLKQAEIGGTEVECFKALKRQEEMAASFRKKNLQEEVIKQKETESKLQTRYGNMLAMVEKAEEIMVGFRAQALKKQEDVEDSHKLKEAKLATGEEEDIAIAMEASA.

HTH myb-type domains lie at 2 to 57 and 58 to 107; these read RIMI…DPSI and KKTE…DAAC. 2 DNA-binding regions (H-T-H motif) span residues 30 to 53 and 81 to 103; these read WARISSLLVRKSAKQCKARWYEWL and WRTIAPIVGRTPSQCLERYEKLL. The span at 113–126 shows a compositional bias: basic and acidic residues; that stretch reads YDAADDPRKLRPGE. Residues 113 to 147 form a disordered region; the sequence is YDAADDPRKLRPGEIDPNPEAKPARPDPVDMDEDE. The stretch at 145 to 189 forms a coiled coil; that stretch reads EDEKEMLSEARARLANTRGKKAKRKAREKQLEEARRLASLQKRRE. T343 is subject to Phosphothreonine. The tract at residues 379–514 is disordered; that stretch reads QTPLLGGENP…PEEKIEEDMS (136 aa). Polar residues-rich tracts occupy residues 406-416 and 433-442; these read QTPNPMLTPSM and RDGSSFSMTP. Positions 446 to 475 are enriched in basic and acidic residues; it reads PFRDELHINEDMDMHESAKLERQRREEARR. A compositionally biased stretch (acidic residues) spans 500-513; that stretch reads EESEEPEEKIEEDM. Residues 685–723 are a coiled coil; sequence GNADKVAAFQEEMENVRKKMEEDEKKAEHMKAKYKTYTK.

The protein belongs to the CEF1 family. In terms of assembly, component of the multiprotein assembly MOS4-associated complex (MAC) at least composed of MOS4, CDC5, PRL1 and PRP19. Interacts with PRL1, MOS4 and PRP19A. Associated with the spliceosome. Expressed extensively in shoot and root meristems.

The protein resides in the nucleus. Component of the MAC complex that probably regulates defense responses through transcriptional control and thereby is essential for plant innate immunity. Possesses a sequence specific DNA sequence 'CTCAGCG' binding activity. Involved in mRNA splicing and cell cycle control. May also play a role in the response to DNA damage. This Arabidopsis thaliana (Mouse-ear cress) protein is Cell division cycle 5-like protein (CDC5).